We begin with the raw amino-acid sequence, 416 residues long: Putative F-box/kelch-repeat protein At1g12870 (416 aa).

In terms of domain architecture, F-box spans M27–I76. 2 Kelch repeats span residues L199–A243 and C297–D341.

This Arabidopsis thaliana (Mouse-ear cress) protein is Putative F-box/kelch-repeat protein At1g12870.